The sequence spans 116 residues: Large ribosomal subunit protein uL22 (116 aa).

The protein belongs to the universal ribosomal protein uL22 family. As to quaternary structure, part of the 50S ribosomal subunit.

Functionally, this protein binds specifically to 23S rRNA; its binding is stimulated by other ribosomal proteins, e.g. L4, L17, and L20. It is important during the early stages of 50S assembly. It makes multiple contacts with different domains of the 23S rRNA in the assembled 50S subunit and ribosome. In terms of biological role, the globular domain of the protein is located near the polypeptide exit tunnel on the outside of the subunit, while an extended beta-hairpin is found that lines the wall of the exit tunnel in the center of the 70S ribosome. This is Large ribosomal subunit protein uL22 from Orientia tsutsugamushi (strain Boryong) (Rickettsia tsutsugamushi).